A 726-amino-acid chain; its full sequence is Quinolinate synthase, chloroplastic (726 aa).

The N-terminal 67 residues, M1–T67, are a transit peptide targeting the chloroplast. The active-site Cysteine persulfide intermediate is the C133. Positions 283 and 309 each coordinate iminosuccinate. Residue C363 coordinates [4Fe-4S] cluster. Iminosuccinate contacts are provided by residues Y392–N394 and S414. C487 is a binding site for [4Fe-4S] cluster. Iminosuccinate is bound by residues H513–E515 and T538. Residue C643 coordinates [4Fe-4S] cluster.

Belongs to the quinolinate synthase family. Type 1 subfamily. Homodimer. Requires [4Fe-4S] cluster as cofactor.

It localises to the plastid. The protein resides in the chloroplast. It catalyses the reaction iminosuccinate + dihydroxyacetone phosphate = quinolinate + phosphate + 2 H2O + H(+). It functions in the pathway alkaloid biosynthesis; nicotine biosynthesis. It participates in cofactor biosynthesis; NAD(+) biosynthesis; quinolinate from iminoaspartate: step 1/1. Involved in the biosynthesis of pyridine alkaloid natural products, leading mainly to the production of anabasine, anatabine, nicotine and nornicotine, effective deterrents against herbivores with antiparasitic and pesticide properties (neurotoxins); nornicotine serves as the precursor in the synthesis of the carcinogen compound N'-nitrosonornicotine (NNN). Catalyzes the condensation of iminoaspartate with dihydroxyacetone phosphate to form quinolinate. This is Quinolinate synthase, chloroplastic from Nicotiana tabacum (Common tobacco).